Here is a 138-residue protein sequence, read N- to C-terminus: Acidic phospholipase A2 Cvv-E6h (138 aa).

An N-terminal signal peptide occupies residues 1–16; that stretch reads MRTLWIVAVLLLGVEG. Cystine bridges form between Cys-42–Cys-131, Cys-44–Cys-60, Cys-59–Cys-111, Cys-65–Cys-138, Cys-66–Cys-104, Cys-73–Cys-97, and Cys-91–Cys-102. 3 residues coordinate Ca(2+): Tyr-43, Gly-45, and Gly-47. His-63 is an active-site residue. Asp-64 lines the Ca(2+) pocket. Asp-105 is an active-site residue.

It belongs to the phospholipase A2 family. Group II subfamily. D49 sub-subfamily. Ca(2+) serves as cofactor. Expressed by the venom gland.

The protein localises to the secreted. It carries out the reaction a 1,2-diacyl-sn-glycero-3-phosphocholine + H2O = a 1-acyl-sn-glycero-3-phosphocholine + a fatty acid + H(+). Snake venom phospholipase A2 (PLA2) that shows very low inhibition of ADP-induced platelet aggregation in platelet-rich plasma of human, rabbit and guinea pig. In vivo, shows efficient edema-inducing activities in rat paws. PLA2 catalyzes the calcium-dependent hydrolysis of the 2-acyl groups in 3-sn-phosphoglycerides. The polypeptide is Acidic phospholipase A2 Cvv-E6h (Crotalus viridis viridis (Prairie rattlesnake)).